Here is a 284-residue protein sequence, read N- to C-terminus: Tropomyosin alpha-1 chain (284 aa).

The residue at position 1 (Met-1) is an N-acetylmethionine. The segment at 1–38 (MDAIKKKMQMLKLDKENALDRAEQAEADKKAAEDRSKQ) is disordered. Positions 1–284 (MDAIKKKMQM…DHALNDMTSI (284 aa)) form a coiled coil. The span at 12–38 (KLDKENALDRAEQAEADKKAAEDRSKQ) shows a compositional bias: basic and acidic residues. 3 positions are modified to phosphoserine: Ala-31, Ser-45, and Lys-51. Residues 116–136 (AEKAADESERGMKVIESRAQK) are disordered. Phosphoserine is present on residues Ser-174, Ser-186, and Ser-206. Lys-213 carries the N6-acetyllysine modification. Phosphoserine is present on Ser-252. At Tyr-261 the chain carries Phosphotyrosine. The residue at position 271 (Ser-271) is a Phosphoserine. Ser-283 is subject to Phosphoserine; by DAPK1.

Belongs to the tropomyosin family. Homodimer. Heterodimer of an alpha (TPM1, TPM3 or TPM4) and a beta (TPM2) chain. Interacts with HRG (via the HRR domain); the interaction contributes to the antiangiogenic properties of the histidine/proline-rich region (HRR) of HRG. Interacts (via N-terminus) with LMOD2 (via N-terminus) and TMOD1 (via N-terminus). Phosphorylated at Ser-283 by DAPK1 in response to oxidative stress and this phosphorylation enhances stress fiber formation in endothelial cells. As to expression, detected in primary breast cancer tissues but undetectable in normal breast tissues in Sudanese patients. Isoform 1 is expressed in adult and fetal skeletal muscle and cardiac tissues, with higher expression levels in the cardiac tissues. Isoform 10 is expressed in adult and fetal cardiac tissues, but not in skeletal muscle.

It localises to the cytoplasm. The protein localises to the cytoskeleton. Its function is as follows. Binds to actin filaments in muscle and non-muscle cells. Plays a central role, in association with the troponin complex, in the calcium dependent regulation of vertebrate striated muscle contraction. Smooth muscle contraction is regulated by interaction with caldesmon. In non-muscle cells is implicated in stabilizing cytoskeleton actin filaments. This is Tropomyosin alpha-1 chain (TPM1) from Homo sapiens (Human).